Here is a 64-residue protein sequence, read N- to C-terminus: Large ribosomal subunit protein bL33 (64 aa).

It belongs to the bacterial ribosomal protein bL33 family.

The protein is Large ribosomal subunit protein bL33 of Synechococcus sp. (strain JA-2-3B'a(2-13)) (Cyanobacteria bacterium Yellowstone B-Prime).